Consider the following 184-residue polypeptide: Probable RNA 2'-phosphotransferase (184 aa).

Belongs to the KptA/TPT1 family.

Its function is as follows. Removes the 2'-phosphate from RNA via an intermediate in which the phosphate is ADP-ribosylated by NAD followed by a presumed transesterification to release the RNA and generate ADP-ribose 1''-2''-cyclic phosphate (APPR&gt;P). May function as an ADP-ribosylase. This is Probable RNA 2'-phosphotransferase from Escherichia coli (strain 55989 / EAEC).